Reading from the N-terminus, the 112-residue chain is UPF0102 protein THEYE_A1950 (112 aa).

It belongs to the UPF0102 family.

This is UPF0102 protein THEYE_A1950 from Thermodesulfovibrio yellowstonii (strain ATCC 51303 / DSM 11347 / YP87).